The chain runs to 307 residues: MSQRVKKLTGLVAATFTPLTAEGEINLSVIAAYVDYLIEKQNVKSVFVNGTTGEGCSLTVDERKHLAAAWCQHGKGKLEQLIVHVGCMSIKDSQELARHAASIGADGISVISPSYFKPINADALRLFIKEVSASAPDLPMYYYHLPGMTGVALEAADVLNGIEREIPSFQGVKYSGTDLRDLGQCVCYSQSRDWSVLYGVDEQLLGALVLGVHGAVGSTYNYLGHIVNQMLSAFNNGNHTQTRDLQFGFMEVITFARTLGFDVSVNKQVMSEVSGLPMGPPRLPLLPCPVSKAQAIAQKIHNFTQGL.

Residues T51 and T52 each contribute to the aceneuramate site. Catalysis depends on Y143, which acts as the Proton donor. Residue K173 is the Schiff-base intermediate with substrate of the active site. The aceneuramate site is built by S175, G199, D201, E202, and S218.

It belongs to the DapA family. NanA subfamily. Homotetramer.

The protein localises to the cytoplasm. The catalysed reaction is aceneuramate = aldehydo-N-acetyl-D-mannosamine + pyruvate. It functions in the pathway amino-sugar metabolism; N-acetylneuraminate degradation. Functionally, catalyzes the cleavage of N-acetylneuraminic acid (sialic acid) to form pyruvate and N-acetylmannosamine via a Schiff base intermediate. It prevents sialic acids from being recycled and returning to the cell surface. Involved in the N-glycolylneuraminic acid (Neu5Gc) degradation pathway. This Danio rerio (Zebrafish) protein is N-acetylneuraminate lyase.